The following is a 413-amino-acid chain: Serine hydroxymethyltransferase (413 aa).

(6S)-5,6,7,8-tetrahydrofolate contacts are provided by residues Leu119 and 123–125 (GHL). Residue Lys228 is modified to N6-(pyridoxal phosphate)lysine. Residue 351–353 (SPF) participates in (6S)-5,6,7,8-tetrahydrofolate binding.

It belongs to the SHMT family. As to quaternary structure, homodimer. Requires pyridoxal 5'-phosphate as cofactor.

It is found in the cytoplasm. The catalysed reaction is (6R)-5,10-methylene-5,6,7,8-tetrahydrofolate + glycine + H2O = (6S)-5,6,7,8-tetrahydrofolate + L-serine. It participates in one-carbon metabolism; tetrahydrofolate interconversion. Its pathway is amino-acid biosynthesis; glycine biosynthesis; glycine from L-serine: step 1/1. Functionally, catalyzes the reversible interconversion of serine and glycine with tetrahydrofolate (THF) serving as the one-carbon carrier. This reaction serves as the major source of one-carbon groups required for the biosynthesis of purines, thymidylate, methionine, and other important biomolecules. Also exhibits THF-independent aldolase activity toward beta-hydroxyamino acids, producing glycine and aldehydes, via a retro-aldol mechanism. This chain is Serine hydroxymethyltransferase, found in Clostridium botulinum (strain ATCC 19397 / Type A).